A 622-amino-acid polypeptide reads, in one-letter code: Putative E3 ubiquitin-protein ligase ORTHRUS 4 (622 aa).

The segment at 12-62 (DGVCMRCQVTPPSEETLTCGTCVTPWHVSCLLPESLASSTGDWECPDCSGV) adopts a PHD-type zinc-finger fold. The segment at 129-169 (CSICIQLPERPVTTPCGHNFCLKCFEKWAVGQGKLTCMICR) adopts an RING-type 1 zinc-finger fold. The region spanning 258-407 (TRNQGVLVGE…HKMCRYLFVR (150 aa)) is the YDG domain. The RING-type 2 zinc finger occupies 498-555 (CQICRKVLSLPVTTPCAHNFCKACLEAKFAGITQLRDRSNGVRKLRAKKNIMTCPCCT). Positions 566-602 (QVNREMMEIIENFKKSEEEAEVAESSNISEEEEEESE) form a coiled coil. The disordered stretch occupies residues 579–622 (KKSEEEAEVAESSNISEEEEEESEPPTKKIKMDNNSVGDTSLSA). A compositionally biased stretch (polar residues) spans 611-622 (DNNSVGDTSLSA).

Its subcellular location is the nucleus. The catalysed reaction is S-ubiquitinyl-[E2 ubiquitin-conjugating enzyme]-L-cysteine + [acceptor protein]-L-lysine = [E2 ubiquitin-conjugating enzyme]-L-cysteine + N(6)-ubiquitinyl-[acceptor protein]-L-lysine.. It participates in protein modification; protein ubiquitination. Its function is as follows. E3 ubiquitin-protein ligase. May participate in CpG methylation-dependent transcriptional regulation. The sequence is that of Putative E3 ubiquitin-protein ligase ORTHRUS 4 (ORTH4) from Arabidopsis thaliana (Mouse-ear cress).